The primary structure comprises 490 residues: Betaine aldehyde dehydrogenase (490 aa).

K(+)-binding residues include Thr-26 and Asp-93. 150-152 (GAW) is a binding site for NAD(+). Lys-162 acts as the Charge relay system in catalysis. Residue 176-179 (KPSE) coordinates NAD(+). Val-180 contributes to the K(+) binding site. NAD(+) is bound at residue 230–233 (GVAT). Leu-246 provides a ligand contact to K(+). Catalysis depends on Glu-252, which acts as the Proton acceptor. The NAD(+) site is built by Gly-254, Cys-286, and Glu-387. Residue Cys-286 is the Nucleophile of the active site. Position 286 is a cysteine sulfenic acid (-SOH) (Cys-286). Positions 457 and 460 each coordinate K(+). Glu-464 functions as the Charge relay system in the catalytic mechanism.

The protein belongs to the aldehyde dehydrogenase family. Dimer of dimers. K(+) is required as a cofactor.

The catalysed reaction is betaine aldehyde + NAD(+) + H2O = glycine betaine + NADH + 2 H(+). The protein operates within amine and polyamine biosynthesis; betaine biosynthesis via choline pathway; betaine from betaine aldehyde: step 1/1. Its function is as follows. Involved in the biosynthesis of the osmoprotectant glycine betaine. Catalyzes the irreversible oxidation of betaine aldehyde to the corresponding acid. The sequence is that of Betaine aldehyde dehydrogenase from Stenotrophomonas maltophilia (strain R551-3).